Here is a 1171-residue protein sequence, read N- to C-terminus: Pyruvate:ferredoxin oxidoreductase (1171 aa).

The pyruvate site is built by T29 and R112. Residues 424 to 428 (SDGTV), K456, N556, and N598 contribute to the CoA site. 2 consecutive 4Fe-4S ferredoxin-type domains span residues 677-706 (NIPQ…PYLA) and 733-764 (FRIQ…MVPL). The [4Fe-4S] cluster site is built by C686, C689, C692, C696, C742, C745, C748, C752, C809, and C812. Thiamine diphosphate is bound by residues E814, C837, 967 to 969 (DGW), and 995 to 1000 (TEVYSN). C837 contributes to the [4Fe-4S] cluster binding site. Residues D967, T995, and V997 each coordinate Mg(2+). N1000 contributes to the pyruvate binding site. Position 1075 (C1075) interacts with [4Fe-4S] cluster.

This sequence belongs to the pyruvate:ferredoxin/flavodoxin oxidoreductase family. Homodimer. The cofactor is [4Fe-4S] cluster. It depends on thiamine diphosphate as a cofactor. Mg(2+) serves as cofactor.

It carries out the reaction 2 oxidized [2Fe-2S]-[ferredoxin] + pyruvate + CoA = 2 reduced [2Fe-2S]-[ferredoxin] + acetyl-CoA + CO2 + H(+). Its function is as follows. Catalyzes the oxidative decarboxylation of pyruvate to acetyl-CoA and carbon dioxide. The two electrons that are generated as a result of pyruvate decarboxylation are used in the reduction of low potential ferredoxins, which provide reducing equivalents for central metabolism. Also catalyzes the reverse reaction, i.e. the synthesis of pyruvate from acetyl-CoA and carbon dioxide. Appears to function physiologically in both directions. The oxidation of pyruvate by PFOR is required to connect glycolysis and the Wood-Ljungdahl pathway of reductive acetogenesis. The conversion of acetyl-CoA to pyruvate links the Wood-Ljungdahl pathway of autotrophic CO2 fixation to the reductive tricarboxylic acid cycle. Can use methyl viologen as electron carrier in vitro. The protein is Pyruvate:ferredoxin oxidoreductase of Moorella thermoacetica (strain ATCC 39073 / JCM 9320).